Reading from the N-terminus, the 256-residue chain is Hydroxyacylglutathione hydrolase (256 aa).

Residues H53, H55, D57, H58, H113, D130, and H168 each coordinate Zn(2+).

It belongs to the metallo-beta-lactamase superfamily. Glyoxalase II family. In terms of assembly, monomer. Zn(2+) is required as a cofactor.

It carries out the reaction an S-(2-hydroxyacyl)glutathione + H2O = a 2-hydroxy carboxylate + glutathione + H(+). The protein operates within secondary metabolite metabolism; methylglyoxal degradation; (R)-lactate from methylglyoxal: step 2/2. Its function is as follows. Thiolesterase that catalyzes the hydrolysis of S-D-lactoyl-glutathione to form glutathione and D-lactic acid. The protein is Hydroxyacylglutathione hydrolase of Tolumonas auensis (strain DSM 9187 / NBRC 110442 / TA 4).